Here is a 207-residue protein sequence, read N- to C-terminus: Nitrophorin-1 (207 aa).

The first 23 residues, 1-23, serve as a signal peptide directing secretion; it reads MKSYTALLAVAILCLFAAVGVSG. Intrachain disulfides connect cysteine 25–cysteine 145 and cysteine 64–cysteine 194. A heme-binding site is contributed by histidine 82.

Belongs to the calycin superfamily. Nitrophorin family. In terms of tissue distribution, salivary gland (at protein level).

It localises to the secreted. Heme-based protein that deliver nitric oxide gas (NO) to the victim while feeding, resulting in vasodilation and inhibition of platelet aggregation. Reversibly binds nitric oxide (NO). Also binds tightly to histamine, which is released by the host to induce wound healing. This Rhodnius prolixus (Triatomid bug) protein is Nitrophorin-1.